Reading from the N-terminus, the 292-residue chain is Tetratricopeptide repeat protein 1 (292 aa).

The tract at residues 20–125 (TDPQEAECLH…SSRLKEEGNE (106 aa)) is disordered. Composition is skewed to basic and acidic residues over residues 36-49 (KEQHSQSELLKDVD) and 75-85 (GADKLENKPED). The segment covering 86-98 (DMNPSELDEEYLM) has biased composition (acidic residues). Position 90 is a phosphoserine (Ser-90). Basic and acidic residues predominate over residues 99-125 (ELEKNMPDEEKKRRREESSRLKEEGNE). TPR repeat units follow at residues 116 to 149 (SSRLKEEGNEQFKKGDYIEAESSYTRALQTCPSC), 155 to 188 (SVLFSNRAAARMKQEKKEMAISDCSKAIQLNPSY), and 189 to 222 (IRAILRRAELYEKTDKLDEALEDYKSILEKDPSV).

Interacts with the GAP domain of NF1. Interacts (via TPR repeats) with HSP90AA1 and HSPA8.

The chain is Tetratricopeptide repeat protein 1 (TTC1) from Bos taurus (Bovine).